We begin with the raw amino-acid sequence, 697 residues long: Tryptophan synthase (697 aa).

The tryptophan synthase alpha chain stretch occupies residues 1 to 298 (MTEQIKKTFL…AVVEPINEMY (298 aa)). Catalysis depends on proton acceptor residues Glu50 and Asp61. Residues 298–697 (YLPQKYGMFG…GPKIGWDLRF (400 aa)) are tryptophan synthase beta chain. An N6-(pyridoxal phosphate)lysine modification is found at Lys381.

In the N-terminal section; belongs to the TrpA family. The protein in the C-terminal section; belongs to the TrpB family. Requires pyridoxal 5'-phosphate as cofactor.

The catalysed reaction is (1S,2R)-1-C-(indol-3-yl)glycerol 3-phosphate + L-serine = D-glyceraldehyde 3-phosphate + L-tryptophan + H2O. It participates in amino-acid biosynthesis; L-tryptophan biosynthesis; L-tryptophan from chorismate: step 5/5. The chain is Tryptophan synthase (trp2) from Schizosaccharomyces pombe (strain 972 / ATCC 24843) (Fission yeast).